The following is a 535-amino-acid chain: Methylmalonate-semialdehyde/malonate-semialdehyde dehydrogenase [acylating], mitochondrial (535 aa).

The transit peptide at 1-32 directs the protein to the mitochondrion; the sequence is MAAAVAAAAAMRSRILQVSSKVNATWYPASSF. Lys47, Lys52, Lys55, and Lys76 each carry N6-acetyllysine; alternate. Residues Lys47, Lys52, Lys55, and Lys76 each carry the N6-succinyllysine; alternate modification. Lys87 is subject to N6-acetyllysine. N6-acetyllysine; alternate occurs at positions 117 and 129. 2 positions are modified to N6-succinyllysine; alternate: Lys117 and Lys129. NAD(+) is bound by residues Ala183, Phe185, Lys209, Glu212, Arg213, and Ser262. Residue Ser262 is modified to Phosphoserine. Lys298 carries the post-translational modification N6-acetyllysine. Catalysis depends on Cys317, which acts as the Nucleophile. Lys330 and Lys331 each carry N6-acetyllysine. N6-acetyllysine; alternate occurs at positions 364 and 376. 2 positions are modified to N6-succinyllysine; alternate: Lys364 and Lys376. Phosphoserine is present on Ser380. The residue at position 391 (Lys391) is an N6-succinyllysine. Glu417 is an NAD(+) binding site. Lys500 carries the post-translational modification N6-acetyllysine. N6-succinyllysine is present on Lys517.

Belongs to the aldehyde dehydrogenase family. Homotetramer. In terms of processing, acetylation of Lys-55; Lys-117 and Lys-331 is observed in liver mitochondria from fasted mice but not from fed mice.

It is found in the mitochondrion. The enzyme catalyses 3-oxopropanoate + NAD(+) + CoA + H2O = hydrogencarbonate + acetyl-CoA + NADH + H(+). It catalyses the reaction 2-methyl-3-oxopropanoate + NAD(+) + CoA + H2O = propanoyl-CoA + hydrogencarbonate + NADH + H(+). It carries out the reaction (R)-2-methyl-3-oxopropanoate + NAD(+) + CoA + H2O = propanoyl-CoA + hydrogencarbonate + NADH + H(+). The catalysed reaction is (S)-2-methyl-3-oxopropanoate + NAD(+) + CoA + H2O = propanoyl-CoA + hydrogencarbonate + NADH + H(+). Its function is as follows. Malonate and methylmalonate semialdehyde dehydrogenase involved in the catabolism of valine, thymine, and compounds catabolized by way of beta-alanine, including uracil and cytidine. The polypeptide is Methylmalonate-semialdehyde/malonate-semialdehyde dehydrogenase [acylating], mitochondrial (Mus musculus (Mouse)).